A 458-amino-acid polypeptide reads, in one-letter code: Ribosomal protein uS12 methylthiotransferase RimO (458 aa).

The region spanning 8–119 is the MTTase N-terminal domain; sequence PTVAFAHLGC…IVDVLQRVEV (112 aa). [4Fe-4S] cluster contacts are provided by cysteine 17, cysteine 53, cysteine 82, cysteine 157, cysteine 161, and cysteine 164. In terms of domain architecture, Radical SAM core spans 143–372; the sequence is TTDQAVAFLK…MALQQPISAE (230 aa). The region spanning 375 to 446 is the TRAM domain; it reads SRWVGRTVDV…IYDLNGQMVG (72 aa).

Belongs to the methylthiotransferase family. RimO subfamily. [4Fe-4S] cluster serves as cofactor.

It is found in the cytoplasm. The catalysed reaction is L-aspartate(89)-[ribosomal protein uS12]-hydrogen + (sulfur carrier)-SH + AH2 + 2 S-adenosyl-L-methionine = 3-methylsulfanyl-L-aspartate(89)-[ribosomal protein uS12]-hydrogen + (sulfur carrier)-H + 5'-deoxyadenosine + L-methionine + A + S-adenosyl-L-homocysteine + 2 H(+). Functionally, catalyzes the methylthiolation of an aspartic acid residue of ribosomal protein uS12. The protein is Ribosomal protein uS12 methylthiotransferase RimO of Synechococcus sp. (strain CC9605).